Reading from the N-terminus, the 437-residue chain is Enolase (437 aa).

Gln-162 contacts (2R)-2-phosphoglycerate. Residue Glu-204 is the Proton donor of the active site. The Mg(2+) site is built by Asp-251, Glu-297, and Asp-324. Residues Lys-349, Arg-378, Ser-379, and Lys-400 each coordinate (2R)-2-phosphoglycerate. Catalysis depends on Lys-349, which acts as the Proton acceptor.

The protein belongs to the enolase family. It depends on Mg(2+) as a cofactor.

It is found in the cytoplasm. Its subcellular location is the secreted. It localises to the cell surface. The catalysed reaction is (2R)-2-phosphoglycerate = phosphoenolpyruvate + H2O. It participates in carbohydrate degradation; glycolysis; pyruvate from D-glyceraldehyde 3-phosphate: step 4/5. In terms of biological role, catalyzes the reversible conversion of 2-phosphoglycerate (2-PG) into phosphoenolpyruvate (PEP). It is essential for the degradation of carbohydrates via glycolysis. The protein is Enolase of Prosthecochloris aestuarii (strain DSM 271 / SK 413).